Reading from the N-terminus, the 252-residue chain is 4-formylbenzenesulfonate dehydrogenase TsaC1/TsaC2 (252 aa).

NAD(+)-binding positions include 9–36 and Asp62; that span reads IVTG…LVAD. Position 142 (Ser142) interacts with substrate. Tyr155 (proton acceptor) is an active-site residue. Lys159 provides a ligand contact to NAD(+).

This sequence belongs to the short-chain dehydrogenases/reductases (SDR) family. Homodimer.

The enzyme catalyses 4-formylbenzenesulfonate + NAD(+) + H2O = 4-sulfobenzoate + NADH + 2 H(+). Involved in the toluene-4-sulfonate degradation pathway. Does not discriminate between the sulfonate and the carboxyl substituents and can also be involved in the p-toluenecarboxylate degradation pathway. In Comamonas testosteroni (Pseudomonas testosteroni), this protein is 4-formylbenzenesulfonate dehydrogenase TsaC1/TsaC2 (tsaC1).